Here is a 73-residue protein sequence, read N- to C-terminus: Conotoxin im23b (73 aa).

The first 22 residues, 1-22 (MIMRMTLTLFVLVVMTAASASG), serve as a signal peptide directing secretion. Residues 23–28 (DALTEA) constitute a propeptide that is removed on maturation. 3 disulfide bridges follow: cysteine 34–cysteine 41, cysteine 45–cysteine 55, and cysteine 56–cysteine 71.

This sequence belongs to the conotoxin K superfamily. As to expression, expressed by the venom duct.

The protein resides in the secreted. In terms of biological role, neurotoxin that induces excitatory symptoms in mice following intracranial administration. No symptoms are observed after intraperitoneal and intravenous (tail vein) injections. The sequence is that of Conotoxin im23b from Conus imperialis (Imperial cone).